A 212-amino-acid chain; its full sequence is Ribonuclease P protein component 3 (212 aa).

Belongs to the eukaryotic/archaeal RNase P protein component 3 family. As to quaternary structure, consists of a catalytic RNA component and at least 4-5 protein subunits.

It localises to the cytoplasm. It carries out the reaction Endonucleolytic cleavage of RNA, removing 5'-extranucleotides from tRNA precursor.. Its function is as follows. Part of ribonuclease P, a protein complex that generates mature tRNA molecules by cleaving their 5'-ends. The sequence is that of Ribonuclease P protein component 3 from Pyrococcus abyssi (strain GE5 / Orsay).